The following is a 124-amino-acid chain: Small ribosomal subunit protein uS10z/uS10x (124 aa).

It belongs to the universal ribosomal protein uS10 family.

This Arabidopsis thaliana (Mouse-ear cress) protein is Small ribosomal subunit protein uS10z/uS10x (RPS20A).